Here is a 137-residue protein sequence, read N- to C-terminus: Large ribosomal subunit protein uL16 (137 aa).

This sequence belongs to the universal ribosomal protein uL16 family. Part of the 50S ribosomal subunit.

Its function is as follows. Binds 23S rRNA and is also seen to make contacts with the A and possibly P site tRNAs. The sequence is that of Large ribosomal subunit protein uL16 from Solidesulfovibrio magneticus (strain ATCC 700980 / DSM 13731 / RS-1) (Desulfovibrio magneticus).